Consider the following 94-residue polypeptide: Integration host factor subunit beta (94 aa).

Belongs to the bacterial histone-like protein family. In terms of assembly, heterodimer of an alpha and a beta chain.

Its function is as follows. This protein is one of the two subunits of integration host factor, a specific DNA-binding protein that functions in genetic recombination as well as in transcriptional and translational control. This chain is Integration host factor subunit beta, found in Mesorhizobium japonicum (strain LMG 29417 / CECT 9101 / MAFF 303099) (Mesorhizobium loti (strain MAFF 303099)).